Here is a 740-residue protein sequence, read N- to C-terminus: Gramillins biosynthetic cluster protein FGSG_11657 (740 aa).

Disordered regions lie at residues 353-391, 414-434, 514-535, and 656-686; these read QADS…SSIP, SKLS…DAAS, PKEQ…GSSD, and EHEG…PQGD. The segment covering 656-667 has biased composition (basic and acidic residues); sequence EHEGEGRADTNR. Positions 668 to 682 are enriched in polar residues; sequence HVSTQSNMPTEQSLL.

Its pathway is mycotoxin biosynthesis. Functionally, part of the gene cluster that mediates the biosynthesis of gramillins A and B, bicyclic lipopeptides that induce cell death in maize leaves but not in wheat leaves. The nonribosomal peptide synthetase GRA1 incorporates respectively a glutamic adic (Glu), a leucine (Leu), a serine (Ser), a hydroxyglutamine (HOGln), a 2-amino decanoic acid, and 2 cysteins (CysB and CysA). The biosynthesis of 2-amino decanoic acid incorporated in gramillins could be initiated by a fatty acid synthase composed of the alpha and beta subunits FGSG_00036 and FGSG_11656. The cytochrome P450 monooxygenase FGSG_15680 could hydroxylate the fatty acid chain. Subsequent oxidation to the ketone by the oxidoreductase FGSG_00048 and transamination by aminotransferase FGSG_00049 could form 2-amino-decanoic acid. On the other hand, FGSG_15680 could also be responsible for the HO-modified glutamine at the gamma-position. Whether hydroxylation occurs on the fully assembled product or on the Gln residue prior to assembly into the gramillins requires further proof. The thioredoxin FGSG_00043 could also be required for the disulfide-bond formation between CysA and CysB. The specific involvement of the remaining proteins from the cluster is more difficult to discern, but could have broader regulatory (FGSG_00040 and FGSG_11657) or enzymatic functions (FGSG_00044 and FGSG_00045). The final C-domain of GRA1 does not possess the expected sequence of a termination CT domain, often implicated in macrocyclization and release of a cyclopeptidein fungal NRPs; and the thioesterase FGSG_00047 may act in concert with the terminal C-domain of GRA1 to catalyze the formation of the macrocyclic anhydride and release of the products. The chain is Gramillins biosynthetic cluster protein FGSG_11657 from Gibberella zeae (strain ATCC MYA-4620 / CBS 123657 / FGSC 9075 / NRRL 31084 / PH-1) (Wheat head blight fungus).